The chain runs to 171 residues: PBAN-type neuropeptides (171 aa).

The signal sequence occupies residues Met1–Gly22. Residues Gly23–Ser47 constitute a propeptide that is removed on maturation. Leu59 is subject to Leucine amide. Residues Thr63–Leu111 constitute a propeptide that is removed on maturation. The segment at His120 to Leu151 is disordered. 3 positions are modified to leucine amide: Leu126, Leu147, and Leu157. The propeptide occupies Ser160–Tyr171.

Belongs to the pyrokinin family.

It localises to the secreted. Its function is as follows. A hormone that controls sex pheromone production in females and pheromone responsiveness in male. Also mediates visceral muscle contractile activity (myotropic activity). In Aedes aegypti (Yellowfever mosquito), this protein is PBAN-type neuropeptides.